Here is a 119-residue protein sequence, read N- to C-terminus: Large ribosomal subunit protein uL24 (119 aa).

Belongs to the universal ribosomal protein uL24 family. In terms of assembly, part of the 50S ribosomal subunit.

One of two assembly initiator proteins, it binds directly to the 5'-end of the 23S rRNA, where it nucleates assembly of the 50S subunit. In terms of biological role, located at the polypeptide exit tunnel on the outside of the subunit. The chain is Large ribosomal subunit protein uL24 from Methanococcus maripaludis (strain DSM 14266 / JCM 13030 / NBRC 101832 / S2 / LL).